The primary structure comprises 462 residues: DNA polymerase delta subunit 3 (462 aa).

N-acetylalanine is present on Ala-2. Disordered stretches follow at residues 144–186 (APAE…ASQQ), 200–230 (TKTQDTNKETKPEAREVTSASSAGGKAPGKG), 254–384 (AVKE…RVLK), and 403–462 (SESC…FQKK). Over residues 156 to 174 (QSNLQAASEAQASELTTNG) the composition is skewed to polar residues. Basic and acidic residues predominate over residues 204–215 (DTNKETKPEARE). Low complexity predominate over residues 218–230 (SASSAGGKAPGKG). Lys-256 participates in a covalent cross-link: Glycyl lysine isopeptide (Lys-Gly) (interchain with G-Cter in SUMO); alternate. Lys-256 participates in a covalent cross-link: Glycyl lysine isopeptide (Lys-Gly) (interchain with G-Cter in SUMO2); alternate. Residue Lys-259 forms a Glycyl lysine isopeptide (Lys-Gly) (interchain with G-Cter in SUMO2) linkage. A compositionally biased stretch (basic and acidic residues) spans 284–305 (RKSEPGKVQQKEKSSRGKRVDL). The residue at position 306 (Ser-306) is a Phosphoserine. Residues 330 to 344 (SSEDEVFEDSPEMYE) show a composition bias toward acidic residues. Pro residues predominate over residues 348–368 (PSPPPVSPPPDPMPKTEPPPV). Ser-403 and Ser-405 each carry phosphoserine. A Phosphothreonine modification is found at Thr-407. Ser-409 bears the Phosphoserine mark. Low complexity predominate over residues 416-427 (KPASAHKPPAAA). A compositionally biased stretch (basic and acidic residues) spans 428 to 437 (VKREPREERK). Lys-429 participates in a covalent cross-link: Glycyl lysine isopeptide (Lys-Gly) (interchain with G-Cter in SUMO); alternate. Lys-429 is covalently cross-linked (Glycyl lysine isopeptide (Lys-Gly) (interchain with G-Cter in SUMO2); alternate). Over residues 451 to 462 (RQVSITGFFQKK) the composition is skewed to polar residues. Positions 452-459 (QVSITGFF) match the PIP-box motif. Ser-454 carries the phosphoserine modification.

As to quaternary structure, component of both the DNA polymerase delta and DNA polymerase zeta complexes. The tetrameric DNA polymerase delta complex (Pol-delta4), which consists of POLD1/p125, POLD2/p50, POLD3/p66/p68 and POLD4/p12, with POLD1 bearing DNA polymerase and 3' to 5' proofreading exonuclease activities. Within this complex, directly interacts with POLD2. Following stress caused by DNA damaging agents or by replication stress, POLD4 is degraded and Pol-delta4 is converted into a trimeric form of the complex (Pol-delta3), which consists of POLD1, POLD2 and POLD3. Pol-delta3 is the major form occurring at S phase replication sites, as well as DNA damage sites. Directly interacts with PCNA, as do POLD1 and POLD4; this interaction stimulates Pol-delta polymerase activity. POLD3 phosphorylation at Ser-454 impairs PCNA binding. Component of the DNA polymerase zeta complex (POLZ), which consists of REV3L, MAD2L2, POLD2 and POLD3, with REV3L bearing DNA polymerase catalytic activity. The DNA polymerase delta complex interacts with POLDIP2; this interaction is probably mediated through direct binding to POLD2. In terms of processing, ubiquitinated, but not targeted to the proteasome. Sumoylated. Sumoylation by SUMO3 may be predominant. Post-translationally, phosphorylation at Ser-454 is thought to decrease the affinity for PCNA and Pol-delta4 processivity. May be phosphorylated by CDK1-cyclin-A complex, as well as CDK2-cyclin-A and CDK2-cyclin-E complexes. PCNA interferes with CDK-cyclin phosphorylation.

The protein localises to the cytoplasm. It is found in the nucleus. Accessory component of both the DNA polymerase delta complex and the DNA polymerase zeta complex. As a component of the trimeric and tetrameric DNA polymerase delta complexes (Pol-delta3 and Pol-delta4, respectively), plays a role in high fidelity genome replication, including in lagging strand synthesis, and repair. Required for optimal Pol-delta activity. Stabilizes the Pol-delta complex and plays a major role in Pol-delta stimulation by PCNA. Pol-delta3 and Pol-delta4 are characterized by the absence or the presence of POLD4. They exhibit differences in catalytic activity. Most notably, Pol-delta3 shows higher proofreading activity than Pol-delta4. Although both Pol-delta3 and Pol-delta4 process Okazaki fragments in vitro, Pol-delta3 may also be better suited to fulfill this task, exhibiting near-absence of strand displacement activity compared to Pol-delta4 and stalling on encounter with the 5'-blocking oligonucleotides. Pol-delta3 idling process may avoid the formation of a gap, while maintaining a nick that can be readily ligated. Along with DNA polymerase kappa, DNA polymerase delta carries out approximately half of nucleotide excision repair (NER) synthesis following UV irradiation. In this context, POLD3, along with PCNA and RFC1-replication factor C complex, is required to recruit POLD1, the catalytic subunit of the polymerase delta complex, to DNA damage sites. Under conditions of DNA replication stress, required for the repair of broken replication forks through break-induced replication (BIR). Involved in the translesion synthesis (TLS) of templates carrying O6-methylguanine or abasic sites performed by Pol-delta4, independently of DNA polymerase zeta (REV3L) or eta (POLH). Facilitates abasic site bypass by DNA polymerase delta by promoting extension from the nucleotide inserted opposite the lesion. Also involved in TLS, as a component of the tetrameric DNA polymerase zeta complex. Along with POLD2, dramatically increases the efficiency and processivity of DNA synthesis of the DNA polymerase zeta complex compared to the minimal zeta complex, consisting of only REV3L and REV7. The sequence is that of DNA polymerase delta subunit 3 (Pold3) from Mus musculus (Mouse).